Here is a 292-residue protein sequence, read N- to C-terminus: Phosphoribosylglycinamide formyltransferase, chloroplastic (292 aa).

The N-terminal 65 residues, 1-65 (MESRVLFSSQ…KAASSTPQIV (65 aa)), are a transit peptide targeting the chloroplast. 88 to 90 (GSN) serves as a coordination point for N(1)-(5-phospho-beta-D-ribosyl)glycinamide. (6R)-10-formyltetrahydrofolate-binding positions include 167-170 (LKLI) and Asn-184. The active-site Proton donor is His-186. (6R)-10-formyltetrahydrofolate is bound at residue Asp-227. A N(1)-(5-phospho-beta-D-ribosyl)glycinamide-binding site is contributed by Glu-256.

Belongs to the GART family.

Its subcellular location is the plastid. It is found in the chloroplast. The catalysed reaction is N(1)-(5-phospho-beta-D-ribosyl)glycinamide + (6R)-10-formyltetrahydrofolate = N(2)-formyl-N(1)-(5-phospho-beta-D-ribosyl)glycinamide + (6S)-5,6,7,8-tetrahydrofolate + H(+). Its pathway is purine metabolism; IMP biosynthesis via de novo pathway; N(2)-formyl-N(1)-(5-phospho-D-ribosyl)glycinamide from N(1)-(5-phospho-D-ribosyl)glycinamide (10-formyl THF route): step 1/1. This Arabidopsis thaliana (Mouse-ear cress) protein is Phosphoribosylglycinamide formyltransferase, chloroplastic (PUR3).